Reading from the N-terminus, the 480-residue chain is Endo-1,6-beta-D-glucanase (480 aa).

An N-terminal signal peptide occupies residues 1–17; sequence MYPPALTLLLTPGLVAA. An N-linked (GlcNAc...) asparagine glycan is attached at Asn50. Glu225 acts as the Proton donor in catalysis. Glu321 functions as the Nucleophile in the catalytic mechanism.

The protein belongs to the glycosyl hydrolase 30 family.

Its subcellular location is the secreted. It catalyses the reaction Random hydrolysis of (1-&gt;6)-linkages in (1-&gt;6)-beta-D-glucans.. Partially degrades N.crassa cell wall beta-D-glucan, liberating small amounts of oligosaccharides. The protein is Endo-1,6-beta-D-glucanase (neg-1) of Neurospora crassa (strain ATCC 24698 / 74-OR23-1A / CBS 708.71 / DSM 1257 / FGSC 987).